Consider the following 395-residue polypeptide: Elongation factor Tu (395 aa).

Residues Lys10–Glu205 enclose the tr-type G domain. The tract at residues Gly19 to Thr26 is G1. GTP is bound at residue Gly19–Thr26. Thr26 is a Mg(2+) binding site. A G2 region spans residues Gly60–Ala64. The interval Asp81–Gly84 is G3. Residues Asp81 to His85 and Asn136 to Asp139 each bind GTP. The G4 stretch occupies residues Asn136–Asp139. The segment at Ser173–Leu175 is G5.

It belongs to the TRAFAC class translation factor GTPase superfamily. Classic translation factor GTPase family. EF-Tu/EF-1A subfamily. Monomer.

The protein resides in the cytoplasm. The enzyme catalyses GTP + H2O = GDP + phosphate + H(+). Its function is as follows. GTP hydrolase that promotes the GTP-dependent binding of aminoacyl-tRNA to the A-site of ribosomes during protein biosynthesis. The protein is Elongation factor Tu of Acidiphilium cryptum (strain JF-5).